The following is a 455-amino-acid chain: Probable glycine dehydrogenase (decarboxylating) subunit 1 (455 aa).

It belongs to the GcvP family. N-terminal subunit subfamily. As to quaternary structure, the glycine cleavage system is composed of four proteins: P, T, L and H. In this organism, the P 'protein' is a heterodimer of two subunits.

It carries out the reaction N(6)-[(R)-lipoyl]-L-lysyl-[glycine-cleavage complex H protein] + glycine + H(+) = N(6)-[(R)-S(8)-aminomethyldihydrolipoyl]-L-lysyl-[glycine-cleavage complex H protein] + CO2. In terms of biological role, the glycine cleavage system catalyzes the degradation of glycine. The P protein binds the alpha-amino group of glycine through its pyridoxal phosphate cofactor; CO(2) is released and the remaining methylamine moiety is then transferred to the lipoamide cofactor of the H protein. This Francisella tularensis subsp. holarctica (strain LVS) protein is Probable glycine dehydrogenase (decarboxylating) subunit 1.